The primary structure comprises 302 residues: MMLSKKNSETLENFSEKLEVEGRSLWQDARRRFMHNRAAVASLIVLFLIALFVTVAPMLSQFTYFDTDWGMMSSAPDMASGHYFGTDSSGRDLLVRVAIGGRISLMVGIAAALVAVIVGTLYGSLSGYLGGKIDSVMMRLLEILNSFPFMFFVILLVTFFGQNILLIFVAIGMVSWLDMARIVRGQTLSLKRKEFIEAAQVGGVSTASIVIRHIVPNVLGVVVVYASLLVPSMILFESFLSFLGLGTQEPLSSWGALLSDGANSMEVSPWLLLFPAGFLVVTLFCFNFIGDGLRDALDPKDR.

At 1–39 (MMLSKKNSETLENFSEKLEVEGRSLWQDARRRFMHNRAA) the chain is on the cytoplasmic side. Residues 40–62 (VASLIVLFLIALFVTVAPMLSQF) form a helical membrane-spanning segment. The Periplasmic portion of the chain corresponds to 63–102 (TYFDTDWGMMSSAPDMASGHYFGTDSSGRDLLVRVAIGGR). Positions 101–290 (GRISLMVGIA…VTLFCFNFIG (190 aa)) constitute an ABC transmembrane type-1 domain. A helical transmembrane segment spans residues 103-125 (ISLMVGIAAALVAVIVGTLYGSL). Residues 126–137 (SGYLGGKIDSVM) are Cytoplasmic-facing. The helical transmembrane segment at 138-160 (MRLLEILNSFPFMFFVILLVTFF) threads the bilayer. Over 161-163 (GQN) the chain is Periplasmic. A helical transmembrane segment spans residues 164–183 (ILLIFVAIGMVSWLDMARIV). At 184-213 (RGQTLSLKRKEFIEAAQVGGVSTASIVIRH) the chain is on the cytoplasmic side. The helical transmembrane segment at 214–236 (IVPNVLGVVVVYASLLVPSMILF) threads the bilayer. The Periplasmic portion of the chain corresponds to 237 to 267 (ESFLSFLGLGTQEPLSSWGALLSDGANSMEV). The chain crosses the membrane as a helical span at residues 268 to 290 (SPWLLLFPAGFLVVTLFCFNFIG). Over 291–302 (DGLRDALDPKDR) the chain is Cytoplasmic.

This sequence belongs to the binding-protein-dependent transport system permease family. OppBC subfamily. In terms of assembly, the complex is composed of two ATP-binding proteins (OppD and OppF), two transmembrane proteins (OppB and OppC) and a solute-binding protein (OppA).

The protein resides in the cell inner membrane. In terms of biological role, part of the ABC transporter complex OppABCDF involved in the uptake of oligopeptides, including the cell wall murein tripeptide L-alanyl-gamma-D-glutamyl-meso-diaminopimelate. Responsible for the translocation of the substrate across the membrane. Plays an important nutritional role and is involved in the recycling of cell wall peptides. The protein is Oligopeptide transport system permease protein OppC of Salmonella typhimurium (strain LT2 / SGSC1412 / ATCC 700720).